The sequence spans 52 residues: Metallothionein-2 (52 aa).

Repeats lie at residues 43 to 47 (QTCKC) and 48 to 52 (QTCKC).

Belongs to the metallothionein superfamily. Type 10 family.

The metallothioneins are involved in the cellular sequestration of toxic metal ions. The polypeptide is Metallothionein-2 (MT-II) (Candida glabrata (strain ATCC 2001 / BCRC 20586 / JCM 3761 / NBRC 0622 / NRRL Y-65 / CBS 138) (Yeast)).